Consider the following 584-residue polypeptide: 65 kDa protein (584 aa).

Positions 459-548 (YDLYIAESAI…TKKVENWLPP (90 aa)) constitute a Toprim domain.

This Zymomonas mobilis subsp. mobilis (strain ATCC 10988 / DSM 424 / LMG 404 / NCIMB 8938 / NRRL B-806 / ZM1) protein is 65 kDa protein.